Reading from the N-terminus, the 226-residue chain is Large ribosomal subunit protein uL1 (226 aa).

This sequence belongs to the universal ribosomal protein uL1 family. Part of the 50S ribosomal subunit.

Functionally, binds directly to 23S rRNA. The L1 stalk is quite mobile in the ribosome, and is involved in E site tRNA release. In terms of biological role, protein L1 is also a translational repressor protein, it controls the translation of the L11 operon by binding to its mRNA. This is Large ribosomal subunit protein uL1 from Mycoplasmoides gallisepticum (strain R(low / passage 15 / clone 2)) (Mycoplasma gallisepticum).